A 270-amino-acid polypeptide reads, in one-letter code: Short chain dehydrogenase/reductase dpfgG (270 aa).

NADP(+) is bound by residues isoleucine 18, aspartate 69, asparagine 96, lysine 130, lysine 171, isoleucine 200, and asparagine 204. Residue lysine 171 is the Lowers pKa of active site Tyr of the active site.

This sequence belongs to the short-chain dehydrogenases/reductases (SDR) family.

The protein operates within secondary metabolite biosynthesis; terpenoid biosynthesis. In terms of biological role, short chain dehydrogenase/reductase; part of the gene cluster that mediates the biosynthesis of diterpenoid pyrones. The first step of the pathway is the synthesis of the alpha-pyrone moiety by the polyketide synthase dpfgA via condensation of one acetyl-CoA starter unit with 3 malonyl-CoA units and 2 methylations. The alpha-pyrone is then combined with geranylgeranyl pyrophosphate (GGPP) formed by the GGPP synthase dpfgD through the action of the prenyltransferase dpfgC to yield a linear alpha-pyrone diterpenoid. Subsequent steps in the diterpenoid pyrone biosynthetic pathway involve the decalin core formation, which is initiated by the epoxidation of the C10-C11 olefin by the FAD-dependent oxidoreductase dpfgE, and is followed by a cyclization cascade catalyzed by the terpene cyclase dpfgB. The short chain dehydrogenase/reductase dpfgG then oxidizes the 8S hydroxy group to a ketone and the short chain dehydrogenase/reductase dpfgH reduces the ketone to the 8R hydroxy group to yield higginsianin B. Higginsianin B is further methylated by the methyltransferase dpfgI to produce the intermediate named FDDP B. The cytochrome P450 monooxygenase dfgpJ then catalyzes a three-step oxidation at C-27 to generate a carboxylic acid as well as C-26 hydroxylation. Finally, methyltransferase dpfgK methylates the carboxylic acid generated by dpfgJ, yielding the final diterpenoid pyrones from the pathway which were named FDDP D and FDDP E. The sequence is that of Short chain dehydrogenase/reductase dpfgG from Gibberella zeae (strain ATCC MYA-4620 / CBS 123657 / FGSC 9075 / NRRL 31084 / PH-1) (Wheat head blight fungus).